A 241-amino-acid chain; its full sequence is DnaA regulatory inactivator Hda (241 aa).

It belongs to the DnaA family. HdA subfamily. The active form seems to be an ADP-bound monomer. Forms the RIDA complex (regulatory inactivation of DnaA) of ATP-DnaA, ADP-Hda and the DNA-loaded beta sliding clamp (dnaN).

In terms of biological role, mediates the interaction of DNA replication initiator protein DnaA with DNA polymerase subunit beta sliding clamp (dnaN). Stimulates hydrolysis of ATP-DnaA to ADP-DnaA, rendering DnaA inactive for reinitiation, a process called regulatory inhibition of DnaA or RIDA. The sequence is that of DnaA regulatory inactivator Hda from Salmonella arizonae (strain ATCC BAA-731 / CDC346-86 / RSK2980).